Here is a 469-residue protein sequence, read N- to C-terminus: Neuraminidase (469 aa).

The Intravirion portion of the chain corresponds to 1–9 (MNPNQKIIT). The chain crosses the membrane as a helical span at residues 10 to 30 (IGSVSLTIATVCFLMQIAILV). The involved in apical transport and lipid raft association stretch occupies residues 11–33 (GSVSLTIATVCFLMQIAILVTTV). The Virion surface segment spans residues 31–469 (TTVTLHFKQH…DGANINFMPI (439 aa)). The hypervariable stalk region stretch occupies residues 36 to 88 (HFKQHECDSPASNQVMPCEPIIIERNITEIVYLNNTTIEKEICPEVVEYRNWS). Residues Asn61, Asn69, Asn70, and Asn86 are each glycosylated (N-linked (GlcNAc...) asparagine; by host). The head of neuraminidase stretch occupies residues 91 to 469 (QCQITGFAPF…DGANINFMPI (379 aa)). 8 disulfides stabilise this stretch: Cys92-Cys417, Cys124-Cys129, Cys183-Cys230, Cys232-Cys237, Cys278-Cys291, Cys280-Cys289, Cys318-Cys337, and Cys421-Cys447. A substrate-binding site is contributed by Arg118. The N-linked (GlcNAc...) asparagine; by host glycan is linked to Asn146. Asp151 acts as the Proton donor/acceptor in catalysis. Arg152 provides a ligand contact to substrate. Residues Asn200 and Asn234 are each glycosylated (N-linked (GlcNAc...) asparagine; by host). Substrate is bound at residue 276-277 (EE). Position 292 (Arg292) interacts with substrate. Asp293, Gly297, and Asp324 together coordinate Ca(2+). Residues 324–350 (DTPRNDDRSSNSNCRNPNNERGNPGVK) are disordered. Residues 333–347 (SNSNCRNPNNERGNP) are compositionally biased toward low complexity. A substrate-binding site is contributed by Arg371. The N-linked (GlcNAc...) asparagine; by host glycan is linked to Asn402. The Nucleophile role is filled by Tyr406.

Belongs to the glycosyl hydrolase 34 family. As to quaternary structure, homotetramer. Ca(2+) is required as a cofactor. N-glycosylated.

Its subcellular location is the virion membrane. The protein localises to the host apical cell membrane. It carries out the reaction Hydrolysis of alpha-(2-&gt;3)-, alpha-(2-&gt;6)-, alpha-(2-&gt;8)- glycosidic linkages of terminal sialic acid residues in oligosaccharides, glycoproteins, glycolipids, colominic acid and synthetic substrates.. Inhibited by the neuraminidase inhibitors zanamivir (Relenza) and oseltamivir (Tamiflu). These drugs interfere with the release of progeny virus from infected cells and are effective against all influenza strains. Resistance to neuraminidase inhibitors is quite rare. In terms of biological role, catalyzes the removal of terminal sialic acid residues from viral and cellular glycoconjugates. Cleaves off the terminal sialic acids on the glycosylated HA during virus budding to facilitate virus release. Additionally helps virus spread through the circulation by further removing sialic acids from the cell surface. These cleavages prevent self-aggregation and ensure the efficient spread of the progeny virus from cell to cell. Otherwise, infection would be limited to one round of replication. Described as a receptor-destroying enzyme because it cleaves a terminal sialic acid from the cellular receptors. May facilitate viral invasion of the upper airways by cleaving the sialic acid moieties on the mucin of the airway epithelial cells. Likely to plays a role in the budding process through its association with lipid rafts during intracellular transport. May additionally display a raft-association independent effect on budding. Plays a role in the determination of host range restriction on replication and virulence. Sialidase activity in late endosome/lysosome traffic seems to enhance virus replication. The chain is Neuraminidase from Aves (Human).